Consider the following 670-residue polypeptide: uncharacterized protein (670 aa).

The interval 53–83 (PTAKPSDFPGDAVTGTQPVPREPSSLPRTTP) is disordered. 27 tandem repeats follow at residues 143–158 (ATPA…TTAT), 171–186 (ATPA…TTAT), 200–214 (ATPA…TTTP), 215–233 (ATPA…TTTP), 234–252 (AMPA…TTTP), 253–268 (AMPA…TTAT), 279–293 (TMPA…TTTP), 294–309 (AMPT…TTAT), 320–334 (TMPA…TTTP), 335–349 (AMPA…VTKP), 362–376 (AMPT…TTTP), 377–391 (AMPT…TTTP), 392–406 (AMPT…TTTP), 407–421 (AKPA…TTTP), 422–436 (AMPA…TTAP), 437–452 (ATPA…TKPT), 464–477 (VKPT…TTTT), 478–493 (AKPT…TKPT), 504–517 (AKPT…TVAT), 518–531 (AKPT…TTTT), 532–545 (AKPT…TTTT), 546–559 (AKPT…TTTT), 560–573 (AKPT…TTTT), 574–587 (AKPA…TTTT), 588–601 (AKPA…TTTT), 602–615 (AKPA…TTTT), and 616–629 (AKPA…TTTT). The tract at residues 187 to 225 (PAGANDTAVTTTSATPAGANDTAVTTTPATPAGANDTAN) is disordered. The span at 205-225 (ANDTAVTTTPATPAGANDTAN) shows a compositional bias: low complexity. The disordered stretch occupies residues 339 to 395 (GANDTANVTKPAGSTDTVVTTTPAMPTGATDTVVTTTPAMPTGATDTVVTTTPAMPT). Polar residues predominate over residues 342–362 (DTANVTKPAGSTDTVVTTTPA). Low complexity predominate over residues 363-395 (MPTGATDTVVTTTPAMPTGATDTVVTTTPAMPT). 2 stretches are compositionally biased toward low complexity: residues 471–482 (GTVTTTTAKPTG) and 490–503 (TKPT…TTTT). The segment at 471–503 (GTVTTTTAKPTGANDTANVTKPTGATGTVTTTT) is disordered. Over residues 525-634 (GTVTTTTAKP…VTTTTAKPAG (110 aa)) the composition is skewed to low complexity. The interval 525-670 (GTVTTTTAKP…GHKPKSGARR (146 aa)) is disordered. Residues 638–654 (GHGHGHGHGHGHGHGHG) are compositionally biased toward basic residues.

This is an uncharacterized protein from Ictalurid herpesvirus 1 (strain Auburn) (IcHV-1).